Consider the following 378-residue polypeptide: Chaperone protein DnaJ 2 (378 aa).

The 65-residue stretch at 4–68 (DYYAVLGVRR…QKKQVYDLGG (65 aa)) folds into the J domain. The CR-type zinc finger occupies 130-212 (GTTKDIQVET…CAGDGRVRSR (83 aa)). Zn(2+)-binding residues include C143, C146, C160, C163, C186, C189, C200, and C203. CXXCXGXG motif repeat units follow at residues 143–150 (CTTCSGEG), 160–167 (CDMCRGRG), 186–193 (CPQCQGFG), and 200–207 (CPECAGDG). Residues 351–378 (RGEERPTGQFQPGQQGLFSRLKDAFNGR) form a disordered region. The segment covering 358 to 367 (GQFQPGQQGL) has biased composition (polar residues).

This sequence belongs to the DnaJ family. Homodimer. It depends on Zn(2+) as a cofactor.

The protein resides in the cytoplasm. Its function is as follows. Participates actively in the response to hyperosmotic and heat shock by preventing the aggregation of stress-denatured proteins and by disaggregating proteins, also in an autonomous, DnaK-independent fashion. Unfolded proteins bind initially to DnaJ; upon interaction with the DnaJ-bound protein, DnaK hydrolyzes its bound ATP, resulting in the formation of a stable complex. GrpE releases ADP from DnaK; ATP binding to DnaK triggers the release of the substrate protein, thus completing the reaction cycle. Several rounds of ATP-dependent interactions between DnaJ, DnaK and GrpE are required for fully efficient folding. Also involved, together with DnaK and GrpE, in the DNA replication of plasmids through activation of initiation proteins. This is Chaperone protein DnaJ 2 from Streptomyces avermitilis (strain ATCC 31267 / DSM 46492 / JCM 5070 / NBRC 14893 / NCIMB 12804 / NRRL 8165 / MA-4680).